The sequence spans 58 residues: Small ribosomal subunit protein eS27 (58 aa).

Residues C10, C13, C29, and C32 each coordinate Zn(2+). Residues 10–32 form a C4-type zinc finger; it reads CPDCEHEQVIFDHPSTIVKCIIC.

Belongs to the eukaryotic ribosomal protein eS27 family. In terms of assembly, part of the 30S ribosomal subunit. It depends on Zn(2+) as a cofactor.

The polypeptide is Small ribosomal subunit protein eS27 (Archaeoglobus fulgidus (strain ATCC 49558 / DSM 4304 / JCM 9628 / NBRC 100126 / VC-16)).